A 391-amino-acid chain; its full sequence is Steroid side-chain-cleaving aldolase (391 aa).

Tyr294 (proton acceptor) is an active-site residue. The active-site Proton donor is the Tyr344.

The protein belongs to the thiolase-like superfamily. In terms of assembly, homodimer. Interacts with the ChsH1/ChsH2 hydratase via the DUF35 C-terminal region of ChsH2 (ChsH2-DUF35).

It catalyses the reaction 17-hydroxy-3-oxochol-4-en-22-oyl-CoA = androst-4-ene-3,17-dione + propanoyl-CoA. Probably involved in bile acid degradation. In vitro, when associated with the ChsH1/ChsH2 hydratase, catalyzes the retroaldol cleavage of 17-hydroxy-3-oxo-4-pregnene-20-carboxyl-CoA (17-HOPC-CoA), forming androst-4-ene-3,17-dione and propionyl-CoA. The in vivo substrate is probably a closely analogous bile acid degradation metabolite. The chain is Steroid side-chain-cleaving aldolase from Thermomonospora curvata (strain ATCC 19995 / DSM 43183 / JCM 3096 / KCTC 9072 / NBRC 15933 / NCIMB 10081 / Henssen B9).